A 525-amino-acid chain; its full sequence is GMP synthase [glutamine-hydrolyzing] (525 aa).

One can recognise a Glutamine amidotransferase type-1 domain in the interval 8-206 (PLLILDFGSQ…VVDICKASTD (199 aa)). Cysteine 85 functions as the Nucleophile in the catalytic mechanism. Catalysis depends on residues histidine 180 and glutamate 182. A GMPS ATP-PPase domain is found at 207–400 (WTPEHIIDEA…LGLPHDMVYR (194 aa)). Position 234–240 (234–240 (SGGVDSS)) interacts with ATP.

In terms of assembly, homodimer.

It carries out the reaction XMP + L-glutamine + ATP + H2O = GMP + L-glutamate + AMP + diphosphate + 2 H(+). It participates in purine metabolism; GMP biosynthesis; GMP from XMP (L-Gln route): step 1/1. In terms of biological role, catalyzes the synthesis of GMP from XMP. This chain is GMP synthase [glutamine-hydrolyzing], found in Legionella pneumophila (strain Lens).